Here is a 136-residue protein sequence, read N- to C-terminus: Outer envelope pore protein 16-4, chloroplastic (136 aa).

Residues 1–59 (MEEELLSAVPCSSLTVESVLRVATAGGLYGLCAGPRDARKIGLSGVSQASFVAKSIGRF) are contains 4 beta strands. 4 consecutive transmembrane segments (helical) span residues 18-34 (SVLR…LCAG), 56-72 (IGRF…VFTM), 86-102 (WVNA…AVAI), and 110-126 (VVGM…LANC).

This sequence belongs to the Tim17/Tim22/Tim23 family. Plastid outer envelope porin OEP16 (TC 1.B.30) subfamily. As to quaternary structure, homodimer and oligomers in membrane.

It localises to the plastid. The protein localises to the chloroplast outer membrane. Voltage-dependent high-conductance channel with a slight cation-selectivity; selective for amino acids but excludes triosephosphates or uncharged sugars. Non-essential amino acid-selective channel protein and translocation pore for NADPH:protochlorophyllide oxidoreductase A (PORA) and possibly PORB. The protein is Outer envelope pore protein 16-4, chloroplastic (OEP164) of Arabidopsis thaliana (Mouse-ear cress).